The primary structure comprises 391 residues: MPGNSFGKLFRVTTFGESHGPAVGVVIDGVPAGLPLTVEDIKFELEFRKPGRLYVSGRREKDEPEILSGIFNNRTTGSPIAVIVRNTDVISSFYEEIRYKPRPGHADLPFIMKYGYENWDYRGGGRASARETVGRVIAGAVAKKLLMLADTWIAGHLRSLGPEELNEEVTFEEVLCSKYSPVRASKKVLEEKYEALIKKATQEGDSYGGIAEVITKNPPIGLGEPVFDKMKAELAKAIMSIPAVTGFEYGLGFMVSKMKGSEANDEIIRKDNKIGWKYNYAGGILGGLTNGEDLIVRCAFKPTSSIRKPQKTIDLRNLEETYISVIGRHDPAVAIRGVTVVESMVALTLVDHAMRAGVIPLVKLTEEQGNIVQQRWERYVRSCKPMEESQL.

Position 48 (Arg48) interacts with NADP(+). Residues 126–128, Gly286, 301–305, and Arg328 contribute to the FMN site; these read RAS and KPTSS.

The protein belongs to the chorismate synthase family. The cofactor is FMNH2.

It carries out the reaction 5-O-(1-carboxyvinyl)-3-phosphoshikimate = chorismate + phosphate. Its pathway is metabolic intermediate biosynthesis; chorismate biosynthesis; chorismate from D-erythrose 4-phosphate and phosphoenolpyruvate: step 7/7. Its function is as follows. Catalyzes the anti-1,4-elimination of the C-3 phosphate and the C-6 proR hydrogen from 5-enolpyruvylshikimate-3-phosphate (EPSP) to yield chorismate, which is the branch point compound that serves as the starting substrate for the three terminal pathways of aromatic amino acid biosynthesis. This reaction introduces a second double bond into the aromatic ring system. This is Chorismate synthase from Saccharolobus islandicus (strain Y.N.15.51 / Yellowstone #2) (Sulfolobus islandicus).